The following is a 298-amino-acid chain: Estradiol 17-beta-dehydrogenase 11 (298 aa).

A signal peptide spans 1–21 (MKYLLDLILLLPLLIVFSIES). 40–64 (LITGAGHGIGRLTAYEFAKLNTKLV) is an NADP(+) binding site. Residue serine 172 participates in substrate binding. Residue tyrosine 185 is the Proton acceptor of the active site.

This sequence belongs to the short-chain dehydrogenases/reductases (SDR) family. 17-beta-HSD 3 subfamily. In terms of tissue distribution, expressed in the liver (at protein level). Also expressed in the intestine and, at much lower levels, in the kidney.

It is found in the endoplasmic reticulum. It localises to the lipid droplet. The catalysed reaction is 17beta-estradiol + NAD(+) = estrone + NADH + H(+). It catalyses the reaction 17beta-estradiol + NADP(+) = estrone + NADPH + H(+). Can convert androstan-3-alpha,17-beta-diol (3-alpha-diol) to androsterone in vitro, suggesting that it may participate in androgen metabolism during steroidogenesis. May act by metabolizing compounds that stimulate steroid synthesis and/or by generating metabolites that inhibit it. Has no activity toward DHEA (dehydroepiandrosterone), or A-dione (4-androste-3,17-dione), and only a slight activity toward testosterone to A-dione. The chain is Estradiol 17-beta-dehydrogenase 11 (Hsd17b11) from Mus musculus (Mouse).